Here is a 248-residue protein sequence, read N- to C-terminus: DNA polymerase sliding clamp 2 (248 aa).

The protein belongs to the PCNA family. In terms of assembly, the subunits circularize to form a toroid; DNA passes through its center. Replication factor C (RFC) is required to load the toroid on the DNA. Forms a dimeric complex with PCNA3 and trimeric complexes PCNA123 and PCNA323; does not form homotrimers. Crystal structures show a heterotetramer of 2 PCNA2 and 2 PCNA3, which would be large enough to clamp a Holliday junction.

In terms of biological role, sliding clamp subunit that acts as a moving platform for DNA processing. Responsible for tethering the catalytic subunit of DNA polymerase and other proteins to DNA during high-speed replication. Both trimeric complexes inhibit DNA ligase and both 3'-5' and 5'-3' activity of Hel308 (Hjm) helicase, but stimulate Hjc, the Holliday junction cleavage enzyme. The polypeptide is DNA polymerase sliding clamp 2 (Sulfurisphaera tokodaii (strain DSM 16993 / JCM 10545 / NBRC 100140 / 7) (Sulfolobus tokodaii)).